We begin with the raw amino-acid sequence, 378 residues long: Diacetylchitobiose uptake system ATP-binding protein MsiK (378 aa).

Residues 4 to 236 form the ABC transporter domain; sequence VTFDKATRVY…PANLFVAGFI (233 aa). An ATP-binding site is contributed by 38–45; it reads GPSGCGKS.

This sequence belongs to the ABC transporter superfamily. In terms of assembly, the DasABC-MsiK complex is composed of two ATP-binding proteins (MsiK), two transmembrane proteins (DasB and DasC) and a solute-binding protein (DasA). The NgcEFG-MsiK complex is composed of two ATP-binding proteins (MsiK), two transmembrane proteins (NgcF and NgcG) and a solute-binding protein (NgcE).

Its subcellular location is the cell membrane. Functionally, part of the ABC transporter complexes DasABC-MsiK and NgcEFG-MsiK involved in N,N'-diacetylchitobiose ((GlcNAc)2) uptake. Responsible for energy coupling to the transport system. In Streptomyces coelicolor (strain ATCC BAA-471 / A3(2) / M145), this protein is Diacetylchitobiose uptake system ATP-binding protein MsiK.